Here is a 180-residue protein sequence, read N- to C-terminus: Peptidyl-tRNA hydrolase (180 aa).

Tyrosine 13 provides a ligand contact to tRNA. Catalysis depends on histidine 18, which acts as the Proton acceptor. TRNA contacts are provided by tyrosine 58, asparagine 60, and asparagine 100.

It belongs to the PTH family. Monomer.

The protein localises to the cytoplasm. The catalysed reaction is an N-acyl-L-alpha-aminoacyl-tRNA + H2O = an N-acyl-L-amino acid + a tRNA + H(+). In terms of biological role, hydrolyzes ribosome-free peptidyl-tRNAs (with 1 or more amino acids incorporated), which drop off the ribosome during protein synthesis, or as a result of ribosome stalling. Its function is as follows. Catalyzes the release of premature peptidyl moieties from peptidyl-tRNA molecules trapped in stalled 50S ribosomal subunits, and thus maintains levels of free tRNAs and 50S ribosomes. The polypeptide is Peptidyl-tRNA hydrolase (Fervidobacterium nodosum (strain ATCC 35602 / DSM 5306 / Rt17-B1)).